A 314-amino-acid polypeptide reads, in one-letter code: 2,3-dihydroxyphenylpropionate/2,3-dihydroxicinnamic acid 1,2-dioxygenase (314 aa).

Histidine 115 serves as the catalytic Proton donor. Histidine 179 acts as the Proton acceptor in catalysis.

The protein belongs to the LigB/MhpB extradiol dioxygenase family. As to quaternary structure, homotetramer. Fe(2+) serves as cofactor.

The catalysed reaction is 3-(2,3-dihydroxyphenyl)propanoate + O2 = (2Z,4E)-2-hydroxy-6-oxonona-2,4-dienedioate + H(+). It carries out the reaction (2E)-3-(2,3-dihydroxyphenyl)prop-2-enoate + O2 = (2Z,4E,7E)-2-hydroxy-6-oxonona-2,4,7-trienedioate + H(+). The protein operates within aromatic compound metabolism; 3-phenylpropanoate degradation. Its function is as follows. Catalyzes the non-heme iron(II)-dependent oxidative cleavage of 2,3-dihydroxyphenylpropionic acid and 2,3-dihydroxicinnamic acid into 2-hydroxy-6-ketononadienedioate and 2-hydroxy-6-ketononatrienedioate, respectively. The protein is 2,3-dihydroxyphenylpropionate/2,3-dihydroxicinnamic acid 1,2-dioxygenase of Rhodococcus jostii (strain RHA1).